The following is a 380-amino-acid chain: MAGNPDVVTVLLGGDVMLGRGVDQILPHPGKPQLRERYMRDATGYVRLAERVNGRIPLPVDWRWPWGEALAVLENTATDVCLINLETTITADGEFADRKPVCYRMHPDNVPALTALRPHVCALANNHILDFGYQGLTDTVAALAGAGIQSVGAGADLLAARRSALVTVGHERRVIVGSVAAESSGVPESWAARRDRPGVWLIRDPAQRDVADDVAAQVLADKRPGDIAIVSMHWGSNWGYATAPGDVAFAHRLIDAGIDMVHGHSSHHPRPIEIYRGKPILYGCGDVVDDYEGIGGHESFRSELRLLYLTVTDPASGNLISLQMLPLRVSRMRLQRASQTDTEWLRNTIERISRRFGIRVVTRPDNLLEVVPAANLTSKE.

The protein belongs to the CapA family.

Functionally, could be involved in the biosynthesis, transport or localization of poly-alpha-L-glutamine (PLG), a cell wall component. Contributes to stress tolerance and virulence. The polypeptide is Probable polyglutamine synthesis accessory protein MT0602 (Mycobacterium tuberculosis (strain CDC 1551 / Oshkosh)).